The chain runs to 170 residues: Protein ripply3 (170 aa).

A WRPW motif motif is present at residues 40–43 (WRPW). Positions 79–114 (HPVRLYMPKSKTSEYLQHMGKKVLANFPVQATIHFY) are ripply homology domain. Over residues 143 to 152 (VNSSRGSGDN) the composition is skewed to polar residues. Positions 143–170 (VNSSRGSGDNYSVPGGPKRNISSHTGSA) are disordered.

Belongs to the ripply family. Interacts with tbx1 and tle4/grg4.

The protein localises to the nucleus. Acts as a transcriptional corepressor. Negative regulator of the transcriptional activity of tbx1 that plays a key role in pharyngeal development. Plays a role in the formation of the anteroposterior (AP) axis during embryonic development; required to establish the posterolateral border of the pre-placodal ectoderm (PPE) acting downstream of the retinoic acid receptor (RAR) signaling. This Xenopus tropicalis (Western clawed frog) protein is Protein ripply3.